A 207-amino-acid chain; its full sequence is Protein-L-isoaspartate O-methyltransferase (207 aa).

Residue S56 is part of the active site.

This sequence belongs to the methyltransferase superfamily. L-isoaspartyl/D-aspartyl protein methyltransferase family.

Its subcellular location is the cytoplasm. It carries out the reaction [protein]-L-isoaspartate + S-adenosyl-L-methionine = [protein]-L-isoaspartate alpha-methyl ester + S-adenosyl-L-homocysteine. Its function is as follows. Catalyzes the methyl esterification of L-isoaspartyl residues in peptides and proteins that result from spontaneous decomposition of normal L-aspartyl and L-asparaginyl residues. It plays a role in the repair and/or degradation of damaged proteins. This is Protein-L-isoaspartate O-methyltransferase from Pyrobaculum islandicum (strain DSM 4184 / JCM 9189 / GEO3).